Consider the following 165-residue polypeptide: Keratin-associated protein 5-7 (165 aa).

7 repeat units span residues 35–38 (CCVP), 41–44 (CCKP), 47–50 (CCVP), 116–119 (CCKP), 126–129 (CCKP), 145–148 (CCNP), and 155–158 (CCVP). The segment at 35–158 (CCVPVCCCKP…CCSQSSCCVP (124 aa)) is 7 X 4 AA repeats of C-C-X-P.

Belongs to the KRTAP type 5 family. Interacts with hair keratins. In terms of tissue distribution, expressed in hair root but not in skin.

In terms of biological role, in the hair cortex, hair keratin intermediate filaments are embedded in an interfilamentous matrix, consisting of hair keratin-associated protein (KRTAP), which are essential for the formation of a rigid and resistant hair shaft through their extensive disulfide bond cross-linking with abundant cysteine residues of hair keratins. The matrix proteins include the high-sulfur and high-glycine-tyrosine keratins. This chain is Keratin-associated protein 5-7 (KRTAP5-7), found in Homo sapiens (Human).